We begin with the raw amino-acid sequence, 408 residues long: Phosphoglycerate kinase (408 aa).

Substrate is bound by residues Asp-22–Asn-24, Arg-39, His-60–Arg-63, Arg-117, and Arg-157. ATP contacts are provided by residues Glu-332 and Gly-358–Thr-361.

This sequence belongs to the phosphoglycerate kinase family. As to quaternary structure, monomer.

It is found in the cytoplasm. The catalysed reaction is (2R)-3-phosphoglycerate + ATP = (2R)-3-phospho-glyceroyl phosphate + ADP. The protein operates within carbohydrate degradation; glycolysis; pyruvate from D-glyceraldehyde 3-phosphate: step 2/5. The chain is Phosphoglycerate kinase from Thermoplasma volcanium (strain ATCC 51530 / DSM 4299 / JCM 9571 / NBRC 15438 / GSS1).